We begin with the raw amino-acid sequence, 293 residues long: 4-diphosphocytidyl-2-C-methyl-D-erythritol kinase (293 aa).

Residue lysine 16 is part of the active site. ATP is bound at residue proline 99 to serine 109. The active site involves aspartate 141.

The protein belongs to the GHMP kinase family. IspE subfamily.

It catalyses the reaction 4-CDP-2-C-methyl-D-erythritol + ATP = 4-CDP-2-C-methyl-D-erythritol 2-phosphate + ADP + H(+). It participates in isoprenoid biosynthesis; isopentenyl diphosphate biosynthesis via DXP pathway; isopentenyl diphosphate from 1-deoxy-D-xylulose 5-phosphate: step 3/6. Functionally, catalyzes the phosphorylation of the position 2 hydroxy group of 4-diphosphocytidyl-2C-methyl-D-erythritol. This is 4-diphosphocytidyl-2-C-methyl-D-erythritol kinase from Paraburkholderia phymatum (strain DSM 17167 / CIP 108236 / LMG 21445 / STM815) (Burkholderia phymatum).